Consider the following 168-residue polypeptide: Calcium-binding protein 2 (168 aa).

EF-hand domains follow at residues 13-48, 48-83, 88-123, and 124-159; these read GMEK…AGKK, KNPE…MNDE, VLNW…QGAE, and DPEL…KKFS. The Ca(2+) site is built by aspartate 26, aspartate 28, asparagine 30, lysine 32, glutamate 37, aspartate 61, aspartate 63, asparagine 65, glutamate 67, glutamate 72, aspartate 101, aspartate 103, aspartate 105, lysine 107, glutamate 112, aspartate 137, aspartate 139, aspartate 141, and glutamate 148.

Not known; probably binds four calcium ions. This Dictyostelium discoideum (Social amoeba) protein is Calcium-binding protein 2 (cbp2).